We begin with the raw amino-acid sequence, 250 residues long: Cytochrome c oxidase subunit 2 (250 aa).

At 1–27 (MGLLFNNLIMNFDAPSPWGIYFQDSAT) the chain is on the mitochondrial intermembrane side. Residues 28–61 (PQMEGLVELHDNIMYYLVVILFGVGWILLSIIRN) form a helical membrane-spanning segment. Residues 62-77 (YISTKSPISHKYLNHG) lie on the Mitochondrial matrix side of the membrane. A helical membrane pass occupies residues 78–107 (TLIELIWTITPAVILILIAFPSFKLLYLMD). The Mitochondrial intermembrane portion of the chain corresponds to 108–250 (EVSDPSMSVL…EKFLTWLEEQ (143 aa)). Cu cation contacts are provided by His-185, Cys-220, Glu-222, Cys-224, His-228, and Met-231. Glu-222 serves as a coordination point for Mg(2+).

Belongs to the cytochrome c oxidase subunit 2 family. As to quaternary structure, component of the cytochrome c oxidase (complex IV, CIV), a multisubunit enzyme composed of 11 subunits. The complex is composed of a catalytic core of 3 subunits Cox1, Cox2 and Cox3, encoded in the mitochondrial DNA, and 8 supernumerary subunits Cox4, Cox5a/Cox5, Cox6, Cox7, Cox8, Cox7a/Cox9, Cox6b/Cox12 and Cox6a/Cox13, which are encoded in the nuclear genome. The complex exists as a monomer or a dimer and forms respiratory supercomplexes (SCs) in the inner mitochondrial membrane with NADH-ubiquinone oxidoreductase (complex I, CI) and ubiquinol-cytochrome c oxidoreductase (cytochrome b-c1 complex, complex III, CIII), resulting in various different assemblies (supercomplexes I(1)IV(1), I(1)III(3)IV(2), III(2)IV(1) and III(2)IV(2) as well as larger supercomplexes of compositions like I(1)III(2)IV(5-6)). The cofactor is Cu cation.

It localises to the mitochondrion inner membrane. The catalysed reaction is 4 Fe(II)-[cytochrome c] + O2 + 8 H(+)(in) = 4 Fe(III)-[cytochrome c] + 2 H2O + 4 H(+)(out). Its function is as follows. Component of the cytochrome c oxidase, the last enzyme in the mitochondrial electron transport chain which drives oxidative phosphorylation. The respiratory chain contains 3 multisubunit complexes succinate dehydrogenase (complex II, CII), ubiquinol-cytochrome c oxidoreductase (cytochrome b-c1 complex, complex III, CIII) and cytochrome c oxidase (complex IV, CIV), that cooperate to transfer electrons derived from NADH and succinate to molecular oxygen, creating an electrochemical gradient over the inner membrane that drives transmembrane transport and the ATP synthase. Cytochrome c oxidase is the component of the respiratory chain that catalyzes the reduction of oxygen to water. Electrons originating from reduced cytochrome c in the intermembrane space (IMS) are transferred via the dinuclear copper A center (CU(A)) of Cox2 and heme A of Cox1 to the active site in Cox1, a binuclear center (BNC) formed by heme A3 and copper B (CU(B)). The BNC reduces molecular oxygen to 2 water molecules using 4 electrons from cytochrome c in the IMS and 4 protons from the mitochondrial matrix. This chain is Cytochrome c oxidase subunit 2 (cox-2), found in Neurospora crassa (strain ATCC 24698 / 74-OR23-1A / CBS 708.71 / DSM 1257 / FGSC 987).